The chain runs to 440 residues: 3-phosphoshikimate 1-carboxyvinyltransferase (440 aa).

3-phosphoshikimate-binding residues include Lys26, Ser27, and Arg31. Lys26 contacts phosphoenolpyruvate. Phosphoenolpyruvate is bound by residues Gly99 and Arg127. The 3-phosphoshikimate site is built by Ser172, Gln174, Asp320, and Lys347. Phosphoenolpyruvate is bound at residue Gln174. The active-site Proton acceptor is Asp320. 2 residues coordinate phosphoenolpyruvate: Arg351 and Arg392.

It belongs to the EPSP synthase family. As to quaternary structure, monomer.

The protein resides in the cytoplasm. It carries out the reaction 3-phosphoshikimate + phosphoenolpyruvate = 5-O-(1-carboxyvinyl)-3-phosphoshikimate + phosphate. It functions in the pathway metabolic intermediate biosynthesis; chorismate biosynthesis; chorismate from D-erythrose 4-phosphate and phosphoenolpyruvate: step 6/7. Catalyzes the transfer of the enolpyruvyl moiety of phosphoenolpyruvate (PEP) to the 5-hydroxyl of shikimate-3-phosphate (S3P) to produce enolpyruvyl shikimate-3-phosphate and inorganic phosphate. The sequence is that of 3-phosphoshikimate 1-carboxyvinyltransferase from Xanthomonas oryzae pv. oryzae (strain MAFF 311018).